A 61-amino-acid chain; its full sequence is Photosystem II reaction center protein K (61 aa).

The propeptide occupies 1–24 (MLNILSFIGICLNSFLYSSSFFVA). Residues 40–60 (MPVIPLFFFLLAFVWQAAVSF) form a helical membrane-spanning segment.

Belongs to the PsbK family. In terms of assembly, PSII is composed of 1 copy each of membrane proteins PsbA, PsbB, PsbC, PsbD, PsbE, PsbF, PsbH, PsbI, PsbJ, PsbK, PsbL, PsbM, PsbT, PsbX, PsbY, PsbZ, Psb30/Ycf12, at least 3 peripheral proteins of the oxygen-evolving complex and a large number of cofactors. It forms dimeric complexes.

The protein resides in the plastid. The protein localises to the chloroplast thylakoid membrane. Its function is as follows. One of the components of the core complex of photosystem II (PSII). PSII is a light-driven water:plastoquinone oxidoreductase that uses light energy to abstract electrons from H(2)O, generating O(2) and a proton gradient subsequently used for ATP formation. It consists of a core antenna complex that captures photons, and an electron transfer chain that converts photonic excitation into a charge separation. The polypeptide is Photosystem II reaction center protein K (Cucumis sativus (Cucumber)).